The sequence spans 157 residues: Protein SINE4 (157 aa).

The KASH domain maps to 104 to 157 (VTSSSDTTKAKKKTTIRRFVSVTMVLLLSWVLVVLMNHFDHLSMNTQIITLVPT). The helical transmembrane segment at 122–142 (FVSVTMVLLLSWVLVVLMNHF) threads the bilayer. A Required for nuclear localization motif is present at residues 154 to 157 (LVPT).

Interacts with SUN1 and SUN2.

The protein localises to the nucleus membrane. This Arabidopsis thaliana (Mouse-ear cress) protein is Protein SINE4.